Reading from the N-terminus, the 372-residue chain is Actin-related protein T3 (372 aa).

Belongs to the actin family. Interacts with PFN3. In terms of tissue distribution, ubiquitously expressed.

It localises to the cytoplasm. The protein localises to the cytoskeleton. It is found in the nucleus. The protein is Actin-related protein T3 (ACTRT3) of Homo sapiens (Human).